A 480-amino-acid polypeptide reads, in one-letter code: Ammonium transporter 2 member 4 (480 aa).

Over 1-27 (MELPSNLLPDEASPEWMNKGDNAWQLT) the chain is Extracellular. The helical transmembrane segment at 28–48 (AATMVGLQSIPGLVILYGSLV) threads the bilayer. At 49–51 (KKT) the chain is on the cytoplasmic side. A helical membrane pass occupies residues 52-72 (WAINSAFMAFYAFASVLLCWV). Residues 73–113 (SWAYQMSFGEKMVFFLGKPNVALDEKFLLGKAFLGNFPNAT) lie on the Extracellular side of the membrane. Asn111 is a glycosylation site (N-linked (GlcNAc...) asparagine). Residues 114-134 (MVFYQGVFAGLTLILIAGALL) form a helical membrane-spanning segment. Residues 135–141 (GRMNIRA) lie on the Cytoplasmic side of the membrane. A helical membrane pass occupies residues 142-162 (WMLFVPLWVTFSYTVVAFSIW). The Extracellular portion of the chain corresponds to 163–175 (CPDGWLAKRGVID). A helical membrane pass occupies residues 176-196 (FAGGYVIHLSAGVAGFTAAYW). Residues 197–214 (VGPRADKDRETFPAATNN) lie on the Cytoplasmic side of the membrane. A helical transmembrane segment spans residues 215–235 (MIMVLAGAGLLWMGWSGFNGG). The Extracellular portion of the chain corresponds to 236-242 (APFVAST). The helical transmembrane segment at 243–263 (IASLAILNTHVCTAASITVWV) threads the bilayer. Residues 264–274 (MLDTFYFGKPT) lie on the Cytoplasmic side of the membrane. Residues 275–295 (VFGAVQGMITGLVCITPAAGV) traverse the membrane as a helical segment. Topologically, residues 296–298 (VQG) are extracellular. Residues 299–319 (WAAILMGFISGSIPWYTMMVL) traverse the membrane as a helical segment. Topologically, residues 320–334 (HNKVNFLKKIDDPMA) are cytoplasmic. Residues 335–355 (VFHTHAIAGALGGILTGFFAV) traverse the membrane as a helical segment. Residues 356-394 (PKLCRLFYMVPDWEKYIGLAYGLQNKGATQAGLKQMVIQ) are Extracellular-facing. Residues 395–415 (IEAIVFVICYNVLMTSLICLI) traverse the membrane as a helical segment. Topologically, residues 416 to 480 (VRVIVPLRLN…SRSLGELQMV (65 aa)) are cytoplasmic.

This sequence belongs to the ammonia transporter channel (TC 1.A.11.2) family.

The protein localises to the cell membrane. Functionally, involved in ammonium transport. May be involved in arbuscular mycorrhizal (AM) symbiosis with AM fungi. This is Ammonium transporter 2 member 4 from Medicago truncatula (Barrel medic).